The sequence spans 341 residues: Ketol-acid reductoisomerase (NADP(+)) (341 aa).

Residues 2 to 182 (TDIVYDKDAD…GGLRAGGIRT (181 aa)) enclose the KARI N-terminal Rossmann domain. Residues 25-28 (YGSQ), K48, S51, S53, and 83-86 (DQHQ) contribute to the NADP(+) site. H108 is a catalytic residue. G134 lines the NADP(+) pocket. One can recognise a KARI C-terminal knotted domain in the interval 183 to 328 (TFTEETETDL…RELRKLFAWN (146 aa)). Positions 191, 195, 227, and 231 each coordinate Mg(2+). S252 serves as a coordination point for substrate.

It belongs to the ketol-acid reductoisomerase family. The cofactor is Mg(2+).

The catalysed reaction is (2R)-2,3-dihydroxy-3-methylbutanoate + NADP(+) = (2S)-2-acetolactate + NADPH + H(+). It catalyses the reaction (2R,3R)-2,3-dihydroxy-3-methylpentanoate + NADP(+) = (S)-2-ethyl-2-hydroxy-3-oxobutanoate + NADPH + H(+). It participates in amino-acid biosynthesis; L-isoleucine biosynthesis; L-isoleucine from 2-oxobutanoate: step 2/4. The protein operates within amino-acid biosynthesis; L-valine biosynthesis; L-valine from pyruvate: step 2/4. Its function is as follows. Involved in the biosynthesis of branched-chain amino acids (BCAA). Catalyzes an alkyl-migration followed by a ketol-acid reduction of (S)-2-acetolactate (S2AL) to yield (R)-2,3-dihydroxy-isovalerate. In the isomerase reaction, S2AL is rearranged via a Mg-dependent methyl migration to produce 3-hydroxy-3-methyl-2-ketobutyrate (HMKB). In the reductase reaction, this 2-ketoacid undergoes a metal-dependent reduction by NADPH to yield (R)-2,3-dihydroxy-isovalerate. This Clavibacter sepedonicus (Clavibacter michiganensis subsp. sepedonicus) protein is Ketol-acid reductoisomerase (NADP(+)).